A 118-amino-acid chain; its full sequence is Large ribosomal subunit protein bL20 (118 aa).

It belongs to the bacterial ribosomal protein bL20 family.

In terms of biological role, binds directly to 23S ribosomal RNA and is necessary for the in vitro assembly process of the 50S ribosomal subunit. It is not involved in the protein synthesizing functions of that subunit. This Elusimicrobium minutum (strain Pei191) protein is Large ribosomal subunit protein bL20.